A 645-amino-acid polypeptide reads, in one-letter code: MSKAVGIDLGTTYSCVAHFANDRVEIIANDQGNRTTPSFVAFTDTERLIGDAAKNQAAMNPANTVFDAKRLIGRKFDDHEVQGDIKHFPFKVVDKASKPMIQVEYKGETKTFSPEEISSMILGKMKETAEGFLGTTVKDAVVTVPAYFNDSQRQATKDAGTIAGLNVMRIINEPTAAAIAYGLDKKSEAEKNVLIFDLGGGTFDVSLLSIEDGIFEVKATAGDTHLGGEDFDNRLVNFFIQEFKRKNKKDISTNQRALRRLRTACERAKRTLSSSAQTSIEIDSLYEGIDFYTSITRARFEELCADLFRSTLEPVDKVLSDAKIDKSKVDEIVLVGGSTRIPKVQKLVSDYFNGKEPNRSINPDEAVAYGAAVQAAILSGDTSSKTQDLLLLDVAPLSLGIETAGGIMTKLIPRNSTIPTKKSETFSTYADNQPGVLIQVFEGERAQTKDNNLLGKFELSGIPPAPRGVPQIEVTFDIDANGILNVSALEKGTGKTQKITITNDKGRLSKEEIEKMVSEAEKFKEEDEKEASRVQAKNQLESYAYSLKNTLGEEQFKSKLDASEIEEVTKAADETISWLDANQTATQEEFADQQKELESKANPIMTKAYQAGATPSGAAGAAPGGFPGGAAPEPSNDGPTVEEVD.

At serine 2 the chain carries N-acetylserine. A disordered region spans residues alanine 581–aspartate 645. The span at alanine 611–alanine 621 shows a compositional bias: low complexity.

This sequence belongs to the heat shock protein 70 family. Binds human histatin-5, an antifungal peptide from saliva.

Its subcellular location is the cytoplasm. It localises to the secreted. The protein resides in the cell wall. Functionally, heat shock protein that may play a role in the transport of polypeptides both across the mitochondrial membranes and into the endoplasmic reticulum. In terms of biological role, acts as a highly immunodominant antigen. Plays a role in the sensitivity to, and the import of candidacidal beta-defensin peptides. HSP70/SSA1 and SSA2 bind histatin-5, a peptide from human saliva, and mediates its fungicidal activity. SSA2 facilitates fungicidal activity of Hst 5 in binding and intracellular translocation, whereas HSP70/SSA1 appears to have a lesser functional role in Hst 5 toxicity. The chain is Heat shock protein SSA2 from Candida albicans (strain SC5314 / ATCC MYA-2876) (Yeast).